The primary structure comprises 878 residues: MRPDHMNFCCLCAAILSSTAVLFGQDPLGETALLTKNPNHVVCTFFEDCTMESLFPALCAHASQDDPLYVLGNSYCWFVSKLHITDPKEALFKEKGDLSIQNFRFLSFTDCSSKESSPSIIHQKNGQLSLRNNGSMSFCRNHAEGSGGAISADAFSLQHNYLFTAFEENSSKGNGGAIQAQTFSLSRNVSPISFARNRADLNGGAICCSNLICSGNVNPLFFTGNSATNGGAICCISDLNTSEKGSLSLACNQETLFASNSAKEKGGAIYAKHMVLRYNGPVSFINNSAKIGGAIAIQSGGSLSILAGEGSVLFQNNSQRTSDQGLVRNAIYLEKDAILSSLEARNGDILFFDPIVQESSSKESPLPSSLQASVTSPTPATASPLVIQTSANRSVIFSSERLSEEEKTPDNLTSQLQQPIELKSGRLVLKDRAVLSAPSLSQDPQALLIMEAGTSLKTSSDLKLATLSIPLHSLDTEKSVTIHAPNLSIQKIFLSNSGDENFYENVELLSKEQNNIPLLTLSKEQSHLHLPDGNLSSHFGYQGDWTFSWKDSDEGHSLIANWTPKNYVPHPERQSTLVANTLWNTYSDMQAVQSMINTIAHGGAYLFGTWGSAVSNLFYAHDSSGKPIDNWHHRSLGYLFGISTHSLDDHSFCLAAGQLLGKSSDSFITSTETTSYIATVQAQLATPLMKISAQACYNESIHELKTKYRSFSKEGFGSWHSVAVSGEVCASIPIVSNGSGLFSSFSIFSKLQGFSGTQDGFEESSGEIRSFSASSFRNISLPMGITFEKKSQKTRNYYYFLGAYIQDLKRDVESGPVVLLKNAVSWDAPMANLDSRAYMFRLTNQRALHRLQTLLNVSYVLRGQSHSYSLDLGTTYRF.

A signal peptide spans 1-24; the sequence is MRPDHMNFCCLCAAILSSTAVLFG. The span at 360-371 shows a compositional bias: low complexity; the sequence is SSKESPLPSSLQ. Positions 360–381 are disordered; it reads SSKESPLPSSLQASVTSPTPAT. A compositionally biased stretch (polar residues) spans 372 to 381; that stretch reads ASVTSPTPAT. In terms of domain architecture, Autotransporter spans 602–878; the sequence is GGAYLFGTWG…SLDLGTTYRF (277 aa).

The protein belongs to the PMP outer membrane protein family.

It is found in the secreted. The protein resides in the cell wall. It localises to the cell outer membrane. This chain is Probable outer membrane protein PmpI (pmpI), found in Chlamydia trachomatis serovar D (strain ATCC VR-885 / DSM 19411 / UW-3/Cx).